A 236-amino-acid chain; its full sequence is Ribosome maturation protein SDO1 homolog (236 aa).

Belongs to the SDO1/SBDS family. In terms of assembly, crystallized in association with 70S ribosomes.

The protein is Ribosome maturation protein SDO1 homolog of Thermococcus kodakarensis (strain ATCC BAA-918 / JCM 12380 / KOD1) (Pyrococcus kodakaraensis (strain KOD1)).